Here is a 1141-residue protein sequence, read N- to C-terminus: Serine-aspartate repeat-containing protein E (1141 aa).

Residues 1–52 (MINRDNKKAITKKGMISNRLNKFSIRKYTVGTASILVGTTLIFGLGNQEAKA) form the signal peptide. The short motif at 23-34 (FSIRKYTVGTAS) is the YSIRK-G/S signaling motif element. The ligand binding A region stretch occupies residues 53–601 (AENTSTENAK…GDGTVKPEEK (549 aa)). The interval 54–248 (ENTSTENAKQ…RSTKPVATAP (195 aa)) is disordered. Residues 61 to 75 (AKQDDATTSDNKEVV) show a composition bias toward basic and acidic residues. Over residues 77–90 (ETENNSTTENDSTN) the composition is skewed to low complexity. Residues 92 to 108 (IKKETNTDSQPEAKEES) are compositionally biased toward basic and acidic residues. Over residues 109 to 126 (TTSSTQQQQNNVTATTET) the composition is skewed to low complexity. Basic and acidic residues predominate over residues 130–145 (NIEKENVKPSTDKTAT). Over residues 159 to 207 (NYTNNDVTTKPSTSEIQTKPTTPQESTNIENSQPQPTPSKVDNQVTDAT) the composition is skewed to polar residues. Over residues 216 to 241 (SKEELKNNPEKLKELVRNDNNTDRST) the composition is skewed to basic and acidic residues. 3 consecutive CNA-B domains span residues 602-714 (LYKI…YKEP), 715-824 (KYNL…YKTP), and 825-935 (KYSL…EEDT). The tract at residues 929 to 1117 (GYFEEDTSDS…GSENNGSNNA (189 aa)) is disordered. Positions 930 to 1080 (YFEEDTSDSD…DSDSDSDSDS (151 aa)) are enriched in acidic residues. The LPXTG sorting signal signature appears at 1104-1108 (LPETG). Pentaglycyl murein peptidoglycan amidated threonine is present on T1107. Residues 1108–1141 (GSENNGSNNATLFGGLFAALGSLLLFGRRKKQNK) constitute a propeptide, removed by sortase.

Belongs to the serine-aspartate repeat-containing protein (SDr) family. Interacts with host complement factor H/CFAH (via C-terminus). Interacts with host complement regulator C4BPA.

Its subcellular location is the secreted. The protein localises to the cell wall. In terms of biological role, cell surface-associated calcium-binding protein which plays an important role in adhesion and pathogenesis. Contributes to the resistance to killing by innate immune components in blood and thus attenuates bacterial clearance by interacting with host complement factor H/CFAH and modulating its activity. Inhibits also bacterial opsonization and killing by interacting with host complement regulator C4BPA and thus inhibiting classical complement pathway activation. The sequence is that of Serine-aspartate repeat-containing protein E (sdrE) from Staphylococcus aureus (strain Mu50 / ATCC 700699).